Here is a 359-residue protein sequence, read N- to C-terminus: MSTSSHMYPMSSGHDQHSYIHNSSYQKAAISSAVEKTRRCIFEKLDLQLSSDFGTFRIADFGCSIGPNTFHVAQSIIDTVKSKRLEESTENSLVPLEFQVFFNDQPTNDFNTLFRTQPLSPEREYFSVGVPGSFYGRVLPRNSIHIGHTSYTTHWLSKVPDNVCDKKSMAWNKNYIQCNNLLEEVTKAYKVQFIKDMEIFLDARAEELVPGGLMIVIGECLPDGVSLYETWQGYVMDTIGDCLMDMAKSGITSEEKIDLFSLPVYFPQFSELKGEIEKNGSFTIELMETTSHPLEGKPLTNDFITSTFRAFLTTIIEKHFGDGVVDELFYRLAKKLSNHPIDFEMRKKQVVYCIVLKRK.

S-adenosyl-L-homocysteine-binding residues include Tyr19, Cys63, Asn68, Asp104, Ser133, and Phe134. Mg(2+) is bound by residues Asn172, Asp258, and Phe260.

Belongs to the methyltransferase superfamily. Type-7 methyltransferase family. Homodimer. Mg(2+) is required as a cofactor.

The protein is Probable S-adenosylmethionine-dependent methyltransferase At5g38100 of Arabidopsis thaliana (Mouse-ear cress).